Reading from the N-terminus, the 163-residue chain is Phosphopantetheine adenylyltransferase (163 aa).

Substrate is bound at residue Thr10. ATP-binding positions include 10 to 11 (TF) and His18. Substrate-binding residues include Lys42, Leu74, and Arg88. Residues 89 to 91 (GLR), Glu99, and 124 to 130 (NSFISST) contribute to the ATP site.

Belongs to the bacterial CoaD family. As to quaternary structure, homohexamer. Mg(2+) is required as a cofactor.

It localises to the cytoplasm. The catalysed reaction is (R)-4'-phosphopantetheine + ATP + H(+) = 3'-dephospho-CoA + diphosphate. Its pathway is cofactor biosynthesis; coenzyme A biosynthesis; CoA from (R)-pantothenate: step 4/5. Its function is as follows. Reversibly transfers an adenylyl group from ATP to 4'-phosphopantetheine, yielding dephospho-CoA (dPCoA) and pyrophosphate. The protein is Phosphopantetheine adenylyltransferase of Shewanella baltica (strain OS195).